Here is a 376-residue protein sequence, read N- to C-terminus: Cyclin-D3-1 (376 aa).

A disordered region spans residues 298–376; the sequence is KRKSHDSSSS…HLPWAIVATP (79 aa). Residues 321 to 349 show a composition bias toward low complexity; sequence NSDESSNDSWSASSCNPPTSSSSPQQQPP. Residues 354–363 show a composition bias toward basic and acidic residues; that stretch reads RGAEENEKKK.

The protein belongs to the cyclin family. Cyclin D subfamily. Interacts with the C-terminal domain of CDKA-1. Interacts with KRP1/ICK1. Interacts with KRP6. In terms of processing, phosphorylated. In terms of tissue distribution, highly expressed in roots and at lower levels in leaves and flowers. Expressed in vegetative shoot meristem and inflorescence.

Involved in the control of the cell cycle at the G1/S (start) transition. Activates the G1/S phase transition in response to cytokinin hormone signal, but declines in response to sucrose starvation leading to G1 arrest. Involved in the induction of mitotic cell division. Plays an important role in the switch from cell proliferation to the final stages of differentiation during plant development. May not be involved in the activation of cell cycle in the root apical meristem (RAM) in the early phase of seed germination. Promotes divisions in the guard cells (GCs) after the guard mother cells (GMC) symmetric division. This Arabidopsis thaliana (Mouse-ear cress) protein is Cyclin-D3-1 (CYCD3-1).